The primary structure comprises 339 residues: N-acetyl-gamma-glutamyl-phosphate reductase (339 aa).

Residue C145 is part of the active site.

Belongs to the NAGSA dehydrogenase family. Type 1 subfamily.

Its subcellular location is the cytoplasm. The enzyme catalyses N-acetyl-L-glutamate 5-semialdehyde + phosphate + NADP(+) = N-acetyl-L-glutamyl 5-phosphate + NADPH + H(+). The protein operates within amino-acid biosynthesis; L-arginine biosynthesis; N(2)-acetyl-L-ornithine from L-glutamate: step 3/4. Its function is as follows. Catalyzes the NADPH-dependent reduction of N-acetyl-5-glutamyl phosphate to yield N-acetyl-L-glutamate 5-semialdehyde. This is N-acetyl-gamma-glutamyl-phosphate reductase from Kosmotoga olearia (strain ATCC BAA-1733 / DSM 21960 / TBF 19.5.1).